A 507-amino-acid chain; its full sequence is ATP synthase subunit alpha (507 aa).

168-175 (GDRQTGKT) contributes to the ATP binding site.

This sequence belongs to the ATPase alpha/beta chains family. In terms of assembly, F-type ATPases have 2 components, CF(1) - the catalytic core - and CF(0) - the membrane proton channel. CF(1) has five subunits: alpha(3), beta(3), gamma(1), delta(1), epsilon(1). CF(0) has three main subunits: a(1), b(2) and c(9-12). The alpha and beta chains form an alternating ring which encloses part of the gamma chain. CF(1) is attached to CF(0) by a central stalk formed by the gamma and epsilon chains, while a peripheral stalk is formed by the delta and b chains.

Its subcellular location is the cell membrane. The catalysed reaction is ATP + H2O + 4 H(+)(in) = ADP + phosphate + 5 H(+)(out). Produces ATP from ADP in the presence of a proton gradient across the membrane. The alpha chain is a regulatory subunit. This Mesomycoplasma hyopneumoniae (strain J / ATCC 25934 / NCTC 10110) (Mycoplasma hyopneumoniae) protein is ATP synthase subunit alpha.